Here is a 608-residue protein sequence, read N- to C-terminus: MAASKPVEAAVVAAAVPSSGSGVGGGGTAGPGTGGLPRWQLALAVGAPLLLGAGAIYLWSRQQRRREARGRGDASGLKRNSERKTPEGRASPAPGSGHPEGPGAHLDMNSLDRAQAAKNKGNKYFKAGKYEQAIQCYTEAISLCPTEKNVDLSTFYQNRAAAFEQLQKWKEVAQDCTKAVELNPKYVKALFRRAKAHEKLDNKKECLEDVTAVCILEGFQNQQSMLLADKVLKLLGKEKAKEKYKNREPLMPSPQFIKSYFSSFTDDIISQPMLKGEKSDEDKDKEGEALEVKENSGYLKAKQYMEEENYDKIISECSKEIDAEGKYMAEALLLRATFYLLIGNANAAKPDLDKVISLKEANVKLRANALIKRGSMYMQQQQPLLSTQDFNMAADIDPQNADVYHHRGQLKILLDQVEEAVADFDECIRLRPESALAQAQKCFALYRQAYTGNNSSQIQAAMKGFEEVIKKFPRCAEGYALYAQALTDQQQFGKADEMYDKCIDLEPDNATTYVHKGLLQLQWKQDLDRGLELISKAIEIDNKCDFAYETMGTIEVQRGNMEKAIDMFNKAINLAKSEMEMAHLYSLCDAAHAQTEVAKKYGLKPPTL.

At Ala2 the chain carries N-acetylalanine. At 2-38 (AASKPVEAAVVAAAVPSSGSGVGGGGTAGPGTGGLPR) the chain is on the mitochondrial intermembrane side. The chain crosses the membrane as a helical span at residues 39 to 59 (WQLALAVGAPLLLGAGAIYLW). The Cytoplasmic portion of the chain corresponds to 60-608 (SRQQRRREAR…KKYGLKPPTL (549 aa)). Positions 67-107 (EARGRGDASGLKRNSERKTPEGRASPAPGSGHPEGPGAHLD) are disordered. Residue Arg71 is modified to Omega-N-methylarginine. Residues Ser91, Ser96, and Ser110 each carry the phosphoserine modification. 2 TPR repeats span residues 114–147 (AQAAKNKGNKYFKAGKYEQAIQCYTEAISLCPTE) and 153–186 (STFYQNRAAAFEQLQKWKEVAQDCTKAVELNPKY). The residue at position 185 (Lys185) is an N6-acetyllysine. Lys275 is covalently cross-linked (Glycyl lysine isopeptide (Lys-Gly) (interchain with G-Cter in SUMO2)). 8 TPR repeats span residues 294–327 (ENSGYLKAKQYMEEENYDKIISECSKEIDAEGKY), 329–362 (AEALLLRATFYLLIGNANAAKPDLDKVISLKEAN), 367–400 (ANALIKRGSMYMQQQQPLLSTQDFNMAADIDPQN), 401–434 (ADVYHHRGQLKILLDQVEEAVADFDECIRLRPES), 440–475 (QKCFALYRQAYTGNNSSQIQAAMKGFEEVIKKFPRC), 476–509 (AEGYALYAQALTDQQQFGKADEMYDKCIDLEPDN), 511–544 (TTYVHKGLLQLQWKQDLDRGLELISKAIEIDNKC), and 545–578 (DFAYETMGTIEVQRGNMEKAIDMFNKAINLAKSE). Ser434 is subject to Phosphoserine.

This sequence belongs to the Tom70 family. Forms part of the preprotein translocase complex of the outer mitochondrial membrane (TOM complex) which consists of at least 7 different proteins (TOMM5, TOMM6, TOMM7, TOMM20, TOMM22, TOMM40 and TOMM70). Interacts with CAPN8. Interacts with TRADD, TRAF6 and STING. Interacts with MAVS; the interaction is enhanced by Sendai virus infection. Interacts with HSPA8 and HSP90AA1; both interactions are required for preprotein mitochondrial import. The interaction with HSP90AA1 is direct and mediates the association of TOMM70 with IRF3 and TBK1. Upon mitochondrial depolarization, interacts with PINK1; the interaction is required for PINK1-TOM-TIM23 supercomplex formation which is critical for PINK1 stabilization at the outer mitochondrial membrane, kinase activation and downstream mitophagy. As to quaternary structure, (Microbial infection) Interacts (via C-terminus) with SARS coronaviru/SARS-CoV and SARS coronavirus-2/SARS-CoV-2 virus protein ORF9b. In terms of assembly, (Microbial infection) Interacts with parasite T.gondii RH strain MAF1b1; the interaction impairs TOMM70 import activity, enables the parasite to associate with the host mitochondria and facilitates the association of MAF1b1 with MIB complex component SAMM50, promoting the formation of SPOTs (structures positive for outer mitochondrial membrane (OMM)); the interaction is probably indirect.

It localises to the mitochondrion outer membrane. Functionally, acts as a receptor of the preprotein translocase complex of the outer mitochondrial membrane (TOM complex). Recognizes and mediates the translocation of mitochondrial preproteins from the cytosol into the mitochondria in a chaperone dependent manner. Mediates TBK1 and IRF3 activation induced by MAVS in response to Sendai virus infection and promotes host antiviral responses during virus infection. Upon Sendai virus infection, recruits HSP90AA1:IRF3:BAX in mitochondrion and the complex induces apoptosis. The chain is Mitochondrial import receptor subunit TOM70 from Homo sapiens (Human).